The following is a 230-amino-acid chain: MRSRKLTGGVRSSARLRARSYSSASLASARDVTSSTSAKTTCLASSSHKATDRRTSKKFKYDKGHLVKAELQKLDPKSDISSLPKVAPVAPCENKFAEDSAEAAVSVPESREPPQGCSTPASEEPSVKAENGLSTEPSSAAAAQEPDDSSAGQAEPVPRTEEVRASVLQMDSSIFLDDDSNQPMPVSRFFGNVELMQDLPPASSSYPSMSRREFRKMHFRAKDDEDDAEG.

Disordered stretches follow at residues 1–85 and 97–166; these read MRSR…SLPK and AEDS…VRAS. Positions 11–30 are enriched in low complexity; sequence RSSARLRARSYSSASLASAR. Over residues 31-48 the composition is skewed to polar residues; sequence DVTSSTSAKTTCLASSSH. Over residues 49 to 78 the composition is skewed to basic and acidic residues; that stretch reads KATDRRTSKKFKYDKGHLVKAELQKLDPKS. The residue at position 180 (S180) is a Phosphoserine.

It belongs to the UPF0688 family.

The protein localises to the nucleus. The sequence is that of UPF0688 protein C1orf174 homolog from Mus musculus (Mouse).